Reading from the N-terminus, the 210-residue chain is Probable GTP-binding protein EngB (210 aa).

Residues 25–199 (TGIEVAFAGR…RQKLDSWFNE (175 aa)) enclose the EngB-type G domain. GTP contacts are provided by residues 33–40 (GRSNAGKS), 60–64 (GRTQL), 78–81 (DLPG), 145–148 (TKAD), and 178–180 (FSS). Mg(2+) contacts are provided by S40 and T62.

It belongs to the TRAFAC class TrmE-Era-EngA-EngB-Septin-like GTPase superfamily. EngB GTPase family. It depends on Mg(2+) as a cofactor.

In terms of biological role, necessary for normal cell division and for the maintenance of normal septation. The sequence is that of Probable GTP-binding protein EngB from Klebsiella pneumoniae (strain 342).